Consider the following 579-residue polypeptide: MVRSMPLRGGRPQAPTAPTRWQLQNTVFAAESQNQPSASEAVVSSTRDAALQRRRALTTDGKAATLVQGSVGGGRVRSARDQRQPGWVRRDKGATSGVPFNLSRSSLPITNRQHPLTDTAANARLRAYEQEVKGRFDRIVPLLQRVSALQHEPDFIEQAQRLTRAELGFDLPQHILERAWVRPLDMRALFAWCVFESHRLFSDRFFQDDPLDGAAGSVAARDFEQFLLDCGIHLLDVSPCADGRLAHTVAYALRIPFSAVRRRSHAGAMFDVENTVNRWVKTEHRRHREGMPNPSTEPTRYLKVVTYHFSSLDPQHQGCAAHGSNDELAAAAGHQRLLDFREAVENSFCCGASVDLLLIGLDTDTDAIRVHPPSRDSEMVLDQWLCARELHAATASMTADQAMAQIAEAIEAGASGPMEPGMVAFLTRLIANNCSQIDYVQDLHGAPYPDAGHAERFIGVGIGFKEVHLRNLTYFAHLDTVEEGAPDLDVGVKIFKGLNVSRDLPIPVVVRFDYSGRVPGARERAIADCQRVNQAIADRYGELVNQGLLHTCLTVRDRNQTAPAEVVGSTLAPPLQEAH.

Residues 72–95 (GGGRVRSARDQRQPGWVRRDKGAT) form a disordered region. Residues 78-93 (SARDQRQPGWVRRDKG) are compositionally biased toward basic and acidic residues. Cys240 is a binding site for Zn(2+). Asp242 serves as the catalytic Proton acceptor. His308 and Cys319 together coordinate Zn(2+).

This sequence belongs to the beta-class carbonic anhydrase family. CsoSCA subfamily. As to quaternary structure, homodimer. Requires Zn(2+) as cofactor.

Its subcellular location is the carboxysome. The catalysed reaction is hydrogencarbonate + H(+) = CO2 + H2O. With respect to regulation, inhibited by dithiothreitol, partially inhibited by acetatzolamide and cyanide. Reversible hydration of carbon dioxide. Essential for photosynthetic carbon dioxide fixation, supplies CO(2) to RuBisCO (ribulose bisphosphate carboxylase, cbbL-cbbS) in the carboxysome. In Parasynechococcus marenigrum (strain WH8102), this protein is Carboxysome shell carbonic anhydrase.